We begin with the raw amino-acid sequence, 651 residues long: PTS system N-acetylglucosamine-specific EIICBA component (651 aa).

In terms of domain architecture, PTS EIIC type-1 spans 1–371 (MNILGFFQRL…FNLKTPGRED (371 aa)). The next 12 membrane-spanning stretches (helical) occupy residues 16 to 36 (LPIA…PDLL), 40 to 60 (FIAQ…AIGV), 70 to 90 (GSAA…MVTI), 92 to 112 (PEIN…GAVY), 132 to 152 (FVPI…GYVW), 165 to 185 (WIVS…RLLI), 192 to 212 (VLNT…GTVF), 232 to 252 (GFFP…YLAA), 264 to 284 (LLSV…EFLF), 285 to 305 (LFLA…SLFI), 308 to 328 (ALGI…VLMY), and 339 to 359 (MLLV…SAVI). The PTS EIIB type-1 domain occupies 390–472 (TQLATSYIAA…KKVVTRGPVA (83 aa)). The active-site Phosphocysteine intermediate; for EIIB activity is the Cys412. The residue at position 412 (Cys412) is a Phosphocysteine; by EIIA. Residues 519-623 (DEAFASKAVG…SMISPVVCSN (105 aa)) form the PTS EIIA type-1 domain. Zn(2+)-binding residues include His556 and His571. The active-site Tele-phosphohistidine intermediate; for EIIA activity is the His571. A Phosphohistidine; by HPr modification is found at His571.

Requires Zn(2+) as cofactor.

Its subcellular location is the cell inner membrane. It catalyses the reaction N(pros)-phospho-L-histidyl-[protein] + N-acetyl-D-glucosamine(out) = N-acetyl-D-glucosamine 6-phosphate(in) + L-histidyl-[protein]. In terms of biological role, the phosphoenolpyruvate-dependent sugar phosphotransferase system (sugar PTS), a major carbohydrate active transport system, catalyzes the phosphorylation of incoming sugar substrates concomitantly with their translocation across the cell membrane. This system is involved in N-acetylglucosamine transport. In Klebsiella pneumoniae, this protein is PTS system N-acetylglucosamine-specific EIICBA component (nagE).